A 452-amino-acid polypeptide reads, in one-letter code: Mitochondrial import inner membrane translocase subunit TIM44 (452 aa).

At threonine 128 the chain carries Phosphothreonine. 166-173 (SGEKLGKT) is a binding site for ATP. An N6-succinyllysine modification is found at lysine 177. Serine 180 is modified (phosphoserine). Position 217 is an N6-succinyllysine (lysine 217).

The protein belongs to the Tim44 family. In terms of assembly, probable component of the PAM complex at least composed of a mitochondrial HSP70 protein, GRPEL1 or GRPEL2, TIMM44, TIMM16/PAM16 and TIMM14/DNAJC19. The complex interacts with the TIMM23 component of the TIM23 complex. Interacts with SLC25A4/ANT1 and SLC25A5/ANT2; leading to inhibit the presequence translocase TIMM23, thereby promoting stabilization of PINK1.

It is found in the mitochondrion inner membrane. Its function is as follows. Essential component of the PAM complex, a complex required for the translocation of transit peptide-containing proteins from the inner membrane into the mitochondrial matrix in an ATP-dependent manner. Recruits mitochondrial HSP70 to drive protein translocation into the matrix using ATP as an energy source. This Mus musculus (Mouse) protein is Mitochondrial import inner membrane translocase subunit TIM44 (Timm44).